Here is a 228-residue protein sequence, read N- to C-terminus: 2,3-bisphosphoglycerate-dependent phosphoglycerate mutase (228 aa).

Residues 8-15, 21-22, Arg58, 111-114, Lys122, 138-139, and 182-183 contribute to the substrate site; these read RHGQSVWN, SG, ERMY, RR, and GN. His9 (tele-phosphohistidine intermediate) is an active-site residue. The active-site Proton donor/acceptor is Glu111.

It belongs to the phosphoglycerate mutase family. BPG-dependent PGAM subfamily.

The catalysed reaction is (2R)-2-phosphoglycerate = (2R)-3-phosphoglycerate. It participates in carbohydrate degradation; glycolysis; pyruvate from D-glyceraldehyde 3-phosphate: step 3/5. Catalyzes the interconversion of 2-phosphoglycerate and 3-phosphoglycerate. This chain is 2,3-bisphosphoglycerate-dependent phosphoglycerate mutase, found in Chlamydia pneumoniae (Chlamydophila pneumoniae).